We begin with the raw amino-acid sequence, 294 residues long: Ribosomal RNA small subunit methyltransferase A (294 aa).

Asparagine 29, valine 31, glycine 56, glutamate 77, aspartate 107, and asparagine 126 together coordinate S-adenosyl-L-methionine.

The protein belongs to the class I-like SAM-binding methyltransferase superfamily. rRNA adenine N(6)-methyltransferase family. RsmA subfamily.

Its subcellular location is the cytoplasm. The enzyme catalyses adenosine(1518)/adenosine(1519) in 16S rRNA + 4 S-adenosyl-L-methionine = N(6)-dimethyladenosine(1518)/N(6)-dimethyladenosine(1519) in 16S rRNA + 4 S-adenosyl-L-homocysteine + 4 H(+). In terms of biological role, specifically dimethylates two adjacent adenosines (A1518 and A1519) in the loop of a conserved hairpin near the 3'-end of 16S rRNA in the 30S particle. May play a critical role in biogenesis of 30S subunits. The polypeptide is Ribosomal RNA small subunit methyltransferase A (Mycobacterium sp. (strain JLS)).